The sequence spans 127 residues: Biogenesis of lysosome-related organelles complex 1 subunit BLS1 (127 aa).

Positions 103–127 (KNSHNTNHGGCNKTKNSSKDKLLDK) are disordered. The span at 105 to 117 (SHNTNHGGCNKTK) shows a compositional bias: polar residues.

It belongs to the BLOC1S1 family. As to quaternary structure, component of the biogenesis of lysosome-related organelles complex-1 (BLOC-1).

It localises to the endosome. Its function is as follows. Component of the biogenesis of lysosome-related organelles complex-1 (BLOC-1), a complex involved in endosomal cargo sorting. The sequence is that of Biogenesis of lysosome-related organelles complex 1 subunit BLS1 (BLS1) from Vanderwaltozyma polyspora (strain ATCC 22028 / DSM 70294 / BCRC 21397 / CBS 2163 / NBRC 10782 / NRRL Y-8283 / UCD 57-17) (Kluyveromyces polysporus).